Here is a 288-residue protein sequence, read N- to C-terminus: Acetyl-coenzyme A carboxylase carboxyl transferase subunit beta (288 aa).

Residues 33-288 (LFSQCPGCKH…LVRLHGGSPR (256 aa)) enclose the CoA carboxyltransferase N-terminal domain. Cys-37, Cys-40, Cys-55, and Cys-58 together coordinate Zn(2+). Residues 37–58 (CPGCKHTIYQKDLGSERICPHC) form a C4-type zinc finger.

The protein belongs to the AccD/PCCB family. Acetyl-CoA carboxylase is a heterohexamer composed of biotin carboxyl carrier protein (AccB), biotin carboxylase (AccC) and two subunits each of ACCase subunit alpha (AccA) and ACCase subunit beta (AccD). Zn(2+) serves as cofactor.

It is found in the cytoplasm. It carries out the reaction N(6)-carboxybiotinyl-L-lysyl-[protein] + acetyl-CoA = N(6)-biotinyl-L-lysyl-[protein] + malonyl-CoA. It functions in the pathway lipid metabolism; malonyl-CoA biosynthesis; malonyl-CoA from acetyl-CoA: step 1/1. Component of the acetyl coenzyme A carboxylase (ACC) complex. Biotin carboxylase (BC) catalyzes the carboxylation of biotin on its carrier protein (BCCP) and then the CO(2) group is transferred by the transcarboxylase to acetyl-CoA to form malonyl-CoA. This Streptococcus pneumoniae serotype 4 (strain ATCC BAA-334 / TIGR4) protein is Acetyl-coenzyme A carboxylase carboxyl transferase subunit beta.